We begin with the raw amino-acid sequence, 330 residues long: Beta-1,6-galactofuranosyltransferase WbbI (330 aa).

It is found in the cytoplasm. It participates in bacterial outer membrane biogenesis; lipopolysaccharide biosynthesis. In terms of biological role, involved in the transfer of galactofuranose (Galf) onto an alpha-D-gluco-configured acceptor substrate to form a beta-1,6-linkage. It uses n-octyl alpha-D-glucopyranoside as an acceptor substrate for the addition of galactofuranose from the donor substrate UDP-galactofuranose. It is not able to use beta-D-glucopyranoside isomers. This is Beta-1,6-galactofuranosyltransferase WbbI (wbbI) from Escherichia coli (strain K12).